A 683-amino-acid polypeptide reads, in one-letter code: Actin-binding LIM protein 3 (683 aa).

The residue at position 1 (Met1) is an N-acetylmethionine. 4 LIM zinc-binding domains span residues 21–80 (IQCY…LYGT), 80–140 (TRCD…MASS), 149–208 (SHCA…QFGI), and 208–268 (IKCE…ARAE). Phosphoserine is present on residues Ser277, Ser280, Ser282, Ser286, Ser290, Ser337, Ser372, and Ser373. The disordered stretch occupies residues 372–472 (SSPGYIDSPT…EDISQTSKYS (101 aa)). Phosphotyrosine is present on Tyr376. 2 positions are modified to phosphoserine: Ser379 and Ser388. Composition is skewed to polar residues over residues 380–393 (PTYS…TFSR), 406–426 (GRSS…TSYQ), and 454–471 (STAT…TSKY). A phosphoserine mark is found at Ser493, Ser503, and Ser504. A Phosphothreonine modification is found at Thr543. Phosphoserine occurs at positions 567, 576, and 607. In terms of domain architecture, HP spans 615–683 (MREYKIYPYE…NELKKQARLF (69 aa)). Arg631 is modified (omega-N-methylarginine).

As to quaternary structure, directly interacts with F-actin and ABRA. As to expression, expressed predominantly in heart and brain.

The protein localises to the cytoplasm. Functionally, may act as scaffold protein. May stimulate ABRA activity and ABRA-dependent SRF transcriptional activity. The chain is Actin-binding LIM protein 3 (ABLIM3) from Homo sapiens (Human).